The following is a 370-amino-acid chain: Pantothenate kinase 3 (370 aa).

Residue E138 is the Proton acceptor of the active site. Residues S192, S195, and R207 each coordinate acetyl-CoA.

Belongs to the type II pantothenate kinase family. Homodimer.

The protein localises to the cytoplasm. It catalyses the reaction (R)-pantothenate + ATP = (R)-4'-phosphopantothenate + ADP + H(+). It participates in cofactor biosynthesis; coenzyme A biosynthesis; CoA from (R)-pantothenate: step 1/5. With respect to regulation, subject to allosteric regulation, exists in two distinct conformational states, a catalytically incompetent (or open) conformation stabilized by the binding of acetyl(acyl)-CoA, and a catalytically competent (or closed) conformation stabilized by ATP-binding. Inhibited by acetyl-CoA and its thioesters which act as allosteric inhibitors and compete with the ATP-binding site. Its function is as follows. Catalyzes the phosphorylation of pantothenate to generate 4'-phosphopantothenate in the first and rate-determining step of coenzyme A (CoA) synthesis. This Bos taurus (Bovine) protein is Pantothenate kinase 3 (PANK3).